A 430-amino-acid chain; its full sequence is tRNA(Ile)-lysidine synthase (430 aa).

21-26 (SGGLDS) is a binding site for ATP.

It belongs to the tRNA(Ile)-lysidine synthase family.

The protein localises to the cytoplasm. It catalyses the reaction cytidine(34) in tRNA(Ile2) + L-lysine + ATP = lysidine(34) in tRNA(Ile2) + AMP + diphosphate + H(+). Its function is as follows. Ligates lysine onto the cytidine present at position 34 of the AUA codon-specific tRNA(Ile) that contains the anticodon CAU, in an ATP-dependent manner. Cytidine is converted to lysidine, thus changing the amino acid specificity of the tRNA from methionine to isoleucine. The chain is tRNA(Ile)-lysidine synthase from Salmonella agona (strain SL483).